Consider the following 895-residue polypeptide: ABC-transporter-regulating transcription factor (895 aa).

A DNA-binding region (zn(2)-C6 fungal-type) is located at residues 69–96 (CDMCRKKKIKCDGKMPKCSHCTNYKTDC). Residues 156–218 (HASGSNTPHN…QKESETEVEG (63 aa)) form a disordered region. The span at 158 to 207 (SGSNTPHNPQKINIPSQSQIAMSQQNSSSHYSTPRLESQSSPRTAATSPE) shows a compositional bias: polar residues. The chain crosses the membrane as a helical span at residues 648–668 (CVWLILYYPVSALVTLFANIL). The segment at 726-813 (ESYSKKKRKS…TGVSTNIPPN (88 aa)) is disordered. Positions 755 to 765 (PSTTQPTQAPS) are enriched in low complexity.

In terms of assembly, interacts with ncaA.

Its subcellular location is the nucleus. It localises to the membrane. Transcription factor that regulates expression of the genes related to ergosterol biosynthesis, including erg3B, erg24A, erg25A, as well as cyp51A that encodes a target protein of azoles. In coordination with ffmA and ncaA, is responsible for the expression of the ABC transporter abcC/cdr1B/abcG1 related to azole resistance. Directly binds both the cyp51A and abcC/cdr1B/abcG1 promoters at a conserved 34 bp region called the atrR response element (ATRE). AtrR also binds to the promoter regions of both the sterol response transcription factor srbA and atrR genes themselves, the latter suggesting the possibility that atrR is autoregulated. Also regulates iron uptake, most likely via cooperation with SrbA. AtrR is necessary for hypoxia adaptation and virulence. The sequence is that of ABC-transporter-regulating transcription factor from Aspergillus fumigatus (strain ATCC MYA-4609 / CBS 101355 / FGSC A1100 / Af293) (Neosartorya fumigata).